Consider the following 178-residue polypeptide: Large ribosomal subunit protein uL6 (178 aa).

This sequence belongs to the universal ribosomal protein uL6 family. As to quaternary structure, part of the 50S ribosomal subunit.

In terms of biological role, this protein binds to the 23S rRNA, and is important in its secondary structure. It is located near the subunit interface in the base of the L7/L12 stalk, and near the tRNA binding site of the peptidyltransferase center. This chain is Large ribosomal subunit protein uL6, found in Staphylococcus aureus (strain Mu3 / ATCC 700698).